A 240-amino-acid polypeptide reads, in one-letter code: EF-hand domain-containing protein D2 (240 aa).

A disordered region spans residues 1–51 (MATDELASKLSRRLQMEGEGGEATEQPGLNGAAAAAAAEAPDETAQALGSA). The residue at position 2 (alanine 2) is an N-acetylalanine. Residue serine 11 is modified to Phosphoserine. The span at 32–47 (AAAAAAAEAPDETAQA) shows a compositional bias: low complexity. Phosphoserine is present on residues serine 74 and serine 76. Tyrosine 83 carries the phosphotyrosine modification. EF-hand domains follow at residues 92 to 127 (KQIK…LGAP) and 128 to 163 (QTHL…AAAG). The Ca(2+) site is built by aspartate 105, aspartate 109, glutamate 116, aspartate 141, aspartate 143, aspartate 145, lysine 147, and glutamate 152. An N6-acetyllysine modification is found at lysine 233.

As to quaternary structure, interacts with CASP9; with inactive form. Detected in thymus, kidney, spleen, lung, liver and brain. Highest abundance in brain and lowest in kidney and thymus.

Its subcellular location is the membrane raft. Its function is as follows. May regulate B-cell receptor (BCR)-induced immature and primary B-cell apoptosis. Plays a role as negative regulator of the canonical NF-kappa-B-activating branch. Controls spontaneous apoptosis through the regulation of BCL2L1 abundance. The sequence is that of EF-hand domain-containing protein D2 (Efhd2) from Mus musculus (Mouse).